We begin with the raw amino-acid sequence, 444 residues long: Acyl-CoA 6-desaturase (444 aa).

Over 1–130 (MGKGGNQGEG…EDMNLFKTNH (130 aa)) the chain is Cytoplasmic. One can recognise a Cytochrome b5 heme-binding domain in the interval 18–95 (MPTFRWEEIQ…LKPLLIGELA (78 aa)). The helical transmembrane segment at 131–151 (LFFFLLLSHIIVMESIAWFIL) threads the bilayer. At 152 to 157 (SYFGNG) the chain is on the lumenal side. The chain crosses the membrane as a helical span at residues 158-178 (WIPTVITAFVLATSQAQAGWL). Over 179-264 (QHDYGHLSVY…KYLPYNHQHE (86 aa)) the chain is Cytoplasmic. Residues 180-184 (HDYGH) carry the Histidine box-1 motif. The short motif at 217-221 (HFQHH) is the Histidine box-2 element. Residues 265 to 285 (YFFLIGPPLLIPMYFQYQIIM) form a helical membrane-spanning segment. Topologically, residues 286–305 (TMIRRRDWVDLAWAISYYAR) are lumenal. A helical transmembrane segment spans residues 306 to 326 (FFYTYIPFYGILGALVFLNFI). Topologically, residues 327–444 (RFLESHWFVW…ELWLDAYLHK (118 aa)) are cytoplasmic. The Histidine box-3 motif lies at 382–386 (QIEHH).

Belongs to the fatty acid desaturase type 1 family. In terms of tissue distribution, expressed in the liver and brain (at protein level). Highest activity is found in the liver and adrenals followed by the testes and other organs, absent in adipose tissue.

Its subcellular location is the endoplasmic reticulum membrane. It localises to the microsome membrane. The enzyme catalyses (9Z,12Z)-octadecadienoyl-CoA + 2 Fe(II)-[cytochrome b5] + O2 + 2 H(+) = (6Z,9Z,12Z)-octadecatrienoyl-CoA + 2 Fe(III)-[cytochrome b5] + 2 H2O. It catalyses the reaction (9Z,12Z,15Z)-octadecatrienoyl-CoA + 2 Fe(II)-[cytochrome b5] + O2 + 2 H(+) = (6Z,9Z,12Z,15Z)-octadecatetraenoyl-CoA + 2 Fe(III)-[cytochrome b5] + 2 H2O. The catalysed reaction is (9Z,12Z,15Z,18Z,21Z)-tetracosapentaenoyl-CoA + 2 Fe(II)-[cytochrome b5] + O2 + 2 H(+) = (6Z,9Z,12Z,15Z,18Z,21Z)-tetracosahexaenoyl-CoA + 2 Fe(III)-[cytochrome b5] + 2 H2O. It carries out the reaction (11E)-octadecenoyl-CoA + 2 Fe(II)-[cytochrome b5] + O2 + 2 H(+) = (6Z,11E)-octadecadienoyl-CoA + 2 Fe(III)-[cytochrome b5] + 2 H2O. The enzyme catalyses (11Z,14Z)-eicosadienoyl-CoA + 2 Fe(II)-[cytochrome b5] + O2 + 2 H(+) = (8Z,11Z,14Z)-eicosatrienoyl-CoA + 2 Fe(III)-[cytochrome b5] + 2 H2O. It catalyses the reaction (11Z,14Z,17Z)-eicosatrienoyl-CoA + 2 Fe(II)-[cytochrome b5] + O2 + 2 H(+) = (8Z,11Z,14Z,17Z)-eicosatetraenoyl-CoA + 2 Fe(III)-[cytochrome b5] + 2 H2O. The protein operates within lipid metabolism; polyunsaturated fatty acid biosynthesis. Functionally, involved in the biosynthesis of highly unsaturated fatty acids (HUFA) from the essential polyunsaturated fatty acids (PUFA) linoleic acid (LA) (18:2n-6) and alpha-linolenic acid (ALA) (18:3n-3) precursors, acting as a fatty acyl-coenzyme A (CoA) desaturase that introduces a cis double bond at carbon 6 of the fatty acyl chain. Catalyzes the first and rate limiting step in this pathway which is the desaturation of LA (18:2n-6) and ALA (18:3n-3) into gamma-linoleate (GLA) (18:3n-6) and stearidonate (18:4n-3), respectively. Subsequently, in the biosynthetic pathway of HUFA n-3 series, it desaturates tetracosapentaenoate (24:5n-3) to tetracosahexaenoate (24:6n-3), which is then converted to docosahexaenoate (DHA)(22:6n-3), an important lipid for nervous system function. It can also desaturate (11E)-octadecenoate (trans-vaccenoate) at carbon 6 generating (6Z,11E)-octadecadienoate. In addition to Delta-6 activity, this enzyme exhibits Delta-8 activity with slight biases toward n-3 fatty acyl-CoA substrates. In Rattus norvegicus (Rat), this protein is Acyl-CoA 6-desaturase (Fads2).